We begin with the raw amino-acid sequence, 169 residues long: Ecotin (169 aa).

An N-terminal signal peptide occupies residues 1–21 (MKKCSIILASVLLATSINAIA). Cys76 and Cys113 form a disulfide bridge.

This sequence belongs to the protease inhibitor I11 (ecotin) family. As to quaternary structure, homodimer.

It localises to the periplasm. General inhibitor of pancreatic serine proteases: inhibits chymotrypsin, trypsin, elastases, factor X, kallikrein as well as a variety of other proteases. The protein is Ecotin of Yersinia pseudotuberculosis serotype O:1b (strain IP 31758).